The primary structure comprises 248 residues: Granzyme C (248 aa).

The first 18 residues, 1–18 (MPPVLILLTLLLPLRAGA), serve as a signal peptide directing secretion. A propeptide spanning residues 19 to 20 (EE) is cleaved from the precursor. The Peptidase S1 domain occupies 21 to 246 (IIGGNEISPH…FVSWIKKTMK (226 aa)). Cys-50 and Cys-66 are joined by a disulfide. Residues His-65 and Asp-109 each act as charge relay system in the active site. Intrachain disulfides connect Cys-143/Cys-210 and Cys-174/Cys-189. The active-site Charge relay system is the Ser-204.

It belongs to the peptidase S1 family. Granzyme subfamily.

It is found in the cytolytic granule. Functionally, this enzyme is probably necessary for target cell lysis in cell-mediated immune responses. The polypeptide is Granzyme C (Gzmc) (Mus musculus (Mouse)).